Consider the following 400-residue polypeptide: Zinc finger CCHC domain-containing protein 3 (400 aa).

A disordered region spans residues 1-157; that stretch reads MATGGGAEEE…LQDEPPAAGP (157 aa). 2 stretches are compositionally biased toward basic and acidic residues: residues 26 to 38 and 47 to 63; these read ARVE…REKM and LAEK…RDET. Positions 66–75 are enriched in gly residues; the sequence is GASGGLGSPG. Positions 91–109 are enriched in basic and acidic residues; the sequence is GDPKGRRRDPTGEASDAYR. Tyr198 is subject to Phosphotyrosine. CCHC-type zinc fingers lie at residues 349–365 and 369–384; these read RCFR…YCRK and CNLC…QCPK.

As to quaternary structure, interacts with CGAS. Interacts with RIGI. Interacts with IFIH1/MDA5.

The protein resides in the cytoplasm. Nucleic acid-binding protein involved in innate immune response to DNA and RNA viruses. Binds DNA and RNA in the cytoplasm and acts by promoting recognition of viral nucleic acids by virus sensors, such as RIGI, IFIH1/MDA5 and CGAS. Acts as a co-sensor for recognition of double-stranded DNA (dsDNA) by cGAS in the cytoplasm, thereby playing a role in innate immune response to cytosolic dsDNA and DNA virus. Binds dsDNA and probably acts by promoting sensing of dsDNA by CGAS, leading to enhance CGAS oligomerization and activation. Promotes sensing of viral RNA by RIG-I-like receptors proteins RIGI and IFIH1/MDA5 via two mechanisms: binds double-stranded RNA (dsRNA), enhancing the binding of RIGI and IFIH1/MDA5 to dsRNA and promotes 'Lys-63'-linked ubiquitination and subsequent activation of RIGI and IFIH1/MDA5. This is Zinc finger CCHC domain-containing protein 3 from Mus musculus (Mouse).